Consider the following 323-residue polypeptide: Ethanolamine-phosphate cytidylyltransferase (323 aa).

It belongs to the cytidylyltransferase family.

It is found in the cytoplasm. Its subcellular location is the nucleus. It carries out the reaction phosphoethanolamine + CTP + H(+) = CDP-ethanolamine + diphosphate. The protein operates within phospholipid metabolism; phosphatidylethanolamine biosynthesis; phosphatidylethanolamine from ethanolamine: step 2/3. Its function is as follows. Ethanolamine-phosphate cytidylyltransferase which catalyzes the second step of phosphatidylethanolamine biosynthesis. Involved in the maintenance of plasma membrane and required for proper sporulation. The polypeptide is Ethanolamine-phosphate cytidylyltransferase (Saccharomyces cerevisiae (strain ATCC 204508 / S288c) (Baker's yeast)).